The chain runs to 541 residues: Chaperonin GroEL 2 (541 aa).

ATP contacts are provided by residues 30–33 (TLGP), K51, 87–91 (DGTTT), G415, and D496.

The protein belongs to the chaperonin (HSP60) family. As to quaternary structure, forms a cylinder of 14 subunits composed of two heptameric rings stacked back-to-back. Interacts with the co-chaperonin GroES.

Its subcellular location is the cytoplasm. The enzyme catalyses ATP + H2O + a folded polypeptide = ADP + phosphate + an unfolded polypeptide.. Its function is as follows. Together with its co-chaperonin GroES, plays an essential role in assisting protein folding. The GroEL-GroES system forms a nano-cage that allows encapsulation of the non-native substrate proteins and provides a physical environment optimized to promote and accelerate protein folding. This chain is Chaperonin GroEL 2, found in Bradyrhizobium sp. (strain BTAi1 / ATCC BAA-1182).